The primary structure comprises 348 residues: Protein RecA (348 aa).

Gly64–Thr71 lines the ATP pocket. A compositionally biased stretch (basic and acidic residues) spans Tyr325–Leu335. Positions Tyr325–Glu348 are disordered. The segment covering Asp336 to Glu348 has biased composition (acidic residues).

Belongs to the RecA family.

Its subcellular location is the cytoplasm. Functionally, can catalyze the hydrolysis of ATP in the presence of single-stranded DNA, the ATP-dependent uptake of single-stranded DNA by duplex DNA, and the ATP-dependent hybridization of homologous single-stranded DNAs. It interacts with LexA causing its activation and leading to its autocatalytic cleavage. The chain is Protein RecA from Listeria monocytogenes serotype 4b (strain CLIP80459).